A 449-amino-acid chain; its full sequence is Nucleoprotein (449 aa).

Residues 1 to 55 (MSFTPGKQSSSRASSGNRSGNGILKWADQSDQSRNVQTRGRRVQSKQTATSQQPS) are disordered. Over residues 9-22 (SSSRASSGNRSGNG) the composition is skewed to low complexity. Polar residues-rich tracts occupy residues 29–38 (QSDQSRNVQT) and 45–55 (SKQTATSQQPS). Positions 52–194 (QQPSGGTVVP…GYYIEGSGRS (143 aa)) are RNA-binding. The 130-residue stretch at 61–190 (PYYSWFSGIT…VLPQGYYIEG (130 aa)) folds into the CoV N NTD domain. Residues Arg-106, Arg-122, and Arg-164 each coordinate RNA. Disordered stretches follow at residues 158 to 231 (PADI…VTPD), 266 to 297 (ILNK…NFGG), and 387 to 449 (MMNI…TSEI). At Ser-167 the chain carries Phosphoserine; by host. Position 174 is a phosphothreonine; by host (Thr-174). Ser-191 carries the post-translational modification Phosphoserine; by host. 2 stretches are compositionally biased toward polar residues: residues 194–204 (SAPNSRSTSRA) and 212–227 (GSRS…STPG). The CoV N CTD domain maps to 259-384 (AKEVRQKILN…QNLNAYQHQE (126 aa)). Positions 266–276 (ILNKPRQKRSP) are enriched in basic residues. Residues 266–385 (ILNKPRQKRS…NLNAYQHQED (120 aa)) form a dimerization region. Ser-391 is modified (phosphoserine; by host). The segment covering 400–410 (QKNGQVENDNI) has biased composition (polar residues). The segment covering 423–440 (KSRELTAEDISLLKKMDE) has biased composition (basic and acidic residues). Position 424 is a phosphoserine; by host (Ser-424). A Phosphothreonine; by host modification is found at Thr-428.

Belongs to the betacoronavirus nucleocapsid protein family. As to quaternary structure, homooligomer. Both monomeric and oligomeric forms interact with RNA. Interacts with protein M. Interacts with NSP3; this interaction serves to tether the genome to the newly translated replicase-transcriptase complex at a very early stage of infection. ADP-ribosylated. The ADP-ribosylation is retained in the virion during infection. In terms of processing, phosphorylated on serine and threonine residues.

The protein localises to the virion. The protein resides in the host endoplasmic reticulum-Golgi intermediate compartment. It localises to the host Golgi apparatus. Functionally, packages the positive strand viral genome RNA into a helical ribonucleocapsid (RNP) and plays a fundamental role during virion assembly through its interactions with the viral genome and membrane protein M. Plays an important role in enhancing the efficiency of subgenomic viral RNA transcription as well as viral replication. This is Nucleoprotein from Sus scrofa (Pig).